A 100-amino-acid chain; its full sequence is Cobalt transport protein CbiN (100 aa).

A run of 2 helical transmembrane segments spans residues 8–28 (LSNW…LIFV) and 69–89 (LLFS…VGLY).

It belongs to the CbiN family. As to quaternary structure, forms an energy-coupling factor (ECF) transporter complex composed of an ATP-binding protein (A component, CbiO), a transmembrane protein (T component, CbiQ) and 2 possible substrate-capture proteins (S components, CbiM and CbiN) of unknown stoichimetry.

The protein resides in the cell inner membrane. The protein operates within cofactor biosynthesis; adenosylcobalamin biosynthesis. Functionally, part of the energy-coupling factor (ECF) transporter complex CbiMNOQ involved in cobalt import. This Nostoc sp. (strain PCC 7120 / SAG 25.82 / UTEX 2576) protein is Cobalt transport protein CbiN.